The sequence spans 414 residues: Lysocardiolipin acyltransferase 1 (414 aa).

The next 2 membrane-spanning stretches (helical) occupy residues 47 to 67 (FILT…SPFL) and 86 to 106 (ATWL…KVII). Residues 123–128 (HRTRMD) carry the HXXXXD motif motif. Lys-221 bears the N6-acetyllysine mark. 2 helical membrane passes run 340–360 (LRVL…SPAM) and 362–382 (LLIY…VIFV).

It belongs to the 1-acyl-sn-glycerol-3-phosphate acyltransferase family. Expressed at higher level in heart, kidney and pancreas than in brain, spleen, liver, lung, small intestine and placenta.

Its subcellular location is the endoplasmic reticulum membrane. The enzyme catalyses a 1-acyl-sn-glycero-3-phosphate + an acyl-CoA = a 1,2-diacyl-sn-glycero-3-phosphate + CoA. It catalyses the reaction a 1-acyl-sn-glycero-3-phospho-(1D-myo-inositol) + an acyl-CoA = a 1,2-diacyl-sn-glycero-3-phospho-(1D-myo-inositol) + CoA. The catalysed reaction is 1-acyl-sn-glycero-3-phospho-(1'-sn-glycerol) + an acyl-CoA = a 1,2-diacyl-sn-glycero-3-phospho-(1'-sn-glycerol) + CoA. It carries out the reaction 1-hexadecanoyl-sn-glycero-3-phosphate + (9Z)-octadecenoyl-CoA = 1-hexadecanoyl-2-(9Z-octadecenoyl)-sn-glycero-3-phosphate + CoA. The enzyme catalyses 1-(9Z-octadecenoyl)-sn-glycero-3-phosphate + (9Z)-octadecenoyl-CoA = 1,2-di-(9Z-octadecenoyl)-sn-glycero-3-phosphate + CoA. It catalyses the reaction 1-(9Z,12Z)-octadecadienoyl-sn-glycero-3-phosphate + (9Z)-octadecenoyl-CoA = 1-(9Z,12Z)-octadecadienoyl-2-(9Z)-octadecenoyl-sn-glycero-3-phosphate + CoA. The catalysed reaction is 1-(9Z,12Z,15Z)-octadecatrienoyl-sn-glycero-3-phosphate + (9Z)-octadecenoyl-CoA = 1-(9Z,12Z,15Z)-octadecatrienoyl-2-(9Z)-octadecenoyl-sn-glycero-3-phosphate + CoA. It carries out the reaction 1-(9Z-octadecenoyl)-sn-glycero-3-phosphate + hexadecanoyl-CoA = 1-(9Z)-octadecenoyl-2-hexadecanoyl-sn-glycero-3-phosphate + CoA. The enzyme catalyses 1-(9Z-octadecenoyl)-sn-glycero-3-phosphate + octadecanoyl-CoA = 1-(9Z-octadecenoyl)-2-octadecanoyl-sn-glycero-3-phosphate + CoA. It catalyses the reaction 1-acyl-sn-glycero-3-phospho-(1'-sn-glycerol) + (9Z)-octadecenoyl-CoA = 1-acyl-2-(9Z-octadecenoyl)-sn-glycero-3-phospho-(1'-sn-glycerol) + CoA. The catalysed reaction is a 1-acyl-sn-glycero-3-phospho-(1D-myo-inositol) + (9Z)-octadecenoyl-CoA = a 1-acyl-2-(9Z-octadecenoyl)-sn-glycero-3-phospho-(1D-myo-inositol) + CoA. It carries out the reaction 1-hexadecanoyl-sn-glycero-3-phospho-(1D-myo-inositol) + hexadecanoyl-CoA = 1,2-dihexadecanoyl-sn-glycero-3-phospho-(1D-myo-inositol) + CoA. The enzyme catalyses 1-hexadecanoyl-sn-glycero-3-phospho-(1D-myo-inositol) + octadecanoyl-CoA = 1-hexadecanoyl-2-octadecanoyl-sn-glycero-3-phospho-(1D-myo-inositol) + CoA. It catalyses the reaction 1-hexadecanoyl-sn-glycero-3-phospho-(1D-myo-inositol) + (9Z)-octadecenoyl-CoA = 1-hexadecanoyl-2-(9Z-octadecenoyl)-sn-glycero-3-phospho-(1D-myo-inositol) + CoA. The catalysed reaction is 1-hexadecanoyl-sn-glycero-3-phospho-(1D-myo-inositol) + (9Z,12Z)-octadecadienoyl-CoA = 1-hexadecanoyl-2-(9Z,12Z-octadecadienoyl)-sn-glycero-3-phospho-(1D-myo-inositol) + CoA. It carries out the reaction 1-hexadecanoyl-sn-glycero-3-phospho-(1D-myo-inositol) + (5Z,8Z,11Z,14Z)-eicosatetraenoyl-CoA = 1-hexadecanoyl-2-(5Z,8Z,11Z,14Z-eicosatetraenoyl)-sn-glycero-3-phospho-D-myo-inositol + CoA. The enzyme catalyses 1-hexadecanoyl-sn-glycero-3-phospho-(1'-sn-glycerol) + hexadecanoyl-CoA = 1,2-dihexadecanoyl-sn-glycero-3-phospho-(1'-sn-glycerol) + CoA. It catalyses the reaction 1-hexadecanoyl-sn-glycero-3-phospho-(1'-sn-glycerol) + octadecanoyl-CoA = 1-hexadecanoyl-2-octadecanoyl-sn-glycero-3-phospho-(1'-sn-glycerol) + CoA. The catalysed reaction is 1-hexadecanoyl-sn-glycero-3-phospho-(1'-sn-glycerol) + (9Z)-octadecenoyl-CoA = 1-hexadecanoyl-2-(9Z-octadecenoyl)-sn-glycero-3-phospho-(1'-sn-glycerol) + CoA. It carries out the reaction 1-hexadecanoyl-sn-glycero-3-phospho-(1'-sn-glycerol) + (9Z,12Z)-octadecadienoyl-CoA = 1-hexadecanoyl-2-(9Z,12Z-octadecadienoyl)-sn-glycero-3-phospho-(1'-sn-glycerol) + CoA. The enzyme catalyses 1-tetradecanoyl-sn-glycero-3-phospho-(1'-sn-glycerol) + (9Z)-octadecenoyl-CoA = 1-tetradecanoyl-2-(9Z-octadecenoyl)-sn-glycero-3-phospho-(1'-sn-glycerol) + CoA. It catalyses the reaction 1-octadecanoyl-sn-glycero-3-phospho-(1'-sn-glycerol) + (9Z)-octadecenoyl-CoA = 1-octadecanoyl-2-(9Z-octadecenoyl)-sn-glycero-3-phospho-(1'-sn-glycerol) + CoA. The catalysed reaction is 1-(9Z-octadecenoyl)-sn-glycero-3-phospho-(1'-sn-glycerol) + (9Z)-octadecenoyl-CoA = 1,2-di-(9Z-octadecenoyl)-sn-glycero-3-phospho-(1'-sn-glycerol) + CoA. It carries out the reaction 1-hexadecanoyl-sn-glycero-3-phospho-(1D-myo-inositol) + dodecanoyl-CoA = 1-hexadecanoyl-2-dodecanoyl-sn-glycero-3-phospho-(1D-myo-inositol) + CoA. The enzyme catalyses 1',3'-bis-[1-acyl-sn-glycero-3-phospho]-glycerol + (9Z)-octadecenoyl-CoA = 1'-[1-acyl-2-(9Z)-octadecenoyl-sn-glycero-3-phospho],3'-[1-acyl,2-hydroxy-sn-glycero-3-phospho]-glycerol + CoA. It catalyses the reaction 1'-[1,2-diacyl-sn-glycero-3-phospho],3'-[1-acyl-sn-glycero-3-phospho]-glycerol + (9Z)-octadecenoyl-CoA = 1'-[1,2-diacyl-sn-glycero-3-phospho],3'-[1-acyl,2-(9Z)-octadecenoyl-sn-glycero-3-phospho]-glycerol + CoA. The catalysed reaction is 1'-[1,2-diacyl-sn-glycero-3-phospho],3'-[1-acyl-sn-glycero-3-phospho]-glycerol + (9Z,12Z)-octadecadienoyl-CoA = 1'-[1,2-diacyl-sn-glycero-3-phospho],3'-[1-acyl,2-(9Z,12Z)-octadecadienoyl-sn-glycero-3-phospho]-glycerol + CoA. It carries out the reaction 1'-[1,2-diacyl-sn-glycero-3-phospho],3'-[1-acyl-sn-glycero-3-phospho]-glycerol + dodecanoyl-CoA = 1'-[1,2-diacyl-sn-glycero-3-phospho],3'-[1-acyl,2-dodecanoyl-sn-glycero-3-phospho]-glycerol + CoA. The enzyme catalyses 1',3'-bis-[1-acyl-sn-glycero-3-phospho]-glycerol + dodecanoyl-CoA = 1'-[1-acyl-2-dodecanoyl-sn-glycero-3-phospho],3'-[1-acyl,2-hydroxy-sn-glycero-3-phospho]-glycerol + CoA. It catalyses the reaction a 1-acyl-sn-glycero-3-phosphate + (9Z)-octadecenoyl-CoA = a 1-acyl-2-(9Z-octadecenoyl)-sn-glycero-3-phosphate + CoA. The catalysed reaction is 1',3'-bis-[1-acyl-sn-glycero-3-phospho]-glycerol + (9Z,12Z)-octadecadienoyl-CoA = 1'-[1-acyl-2-(9Z,12Z)-octadecadienoyl-sn-glycero-3-phospho],3'-[1-acyl,2-hydroxy-sn-glycero-3-phospho]-glycerol + CoA. It carries out the reaction 1',3'-bis-[1-acyl-sn-glycero-3-phospho]-glycerol + hexadecanoyl-CoA = 1'-[1-acyl-2-hexadecanoyl-sn-glycero-3-phospho],3'-[1-acyl,2-hydroxy-sn-glycero-3-phospho]-glycerol + CoA. The enzyme catalyses 1',3'-bis-[1-acyl-sn-glycero-3-phospho]-glycerol + octadecanoyl-CoA = 1'-[1-acyl-2-octadecanoyl-sn-glycero-3-phospho],3'-[1-acyl,2-hydroxy-sn-glycero-3-phospho]-glycerol + CoA. It catalyses the reaction 1'-[1,2-diacyl-sn-glycero-3-phospho],3'-[1-acyl-sn-glycero-3-phospho]-glycerol + octanoyl-CoA = 1'-[1,2-diacyl-sn-glycero-3-phospho],3'-[1-acyl,2-octanoyl-sn-glycero-3-phospho]-glycerol + CoA. The catalysed reaction is 1',3'-bis-[1-acyl-sn-glycero-3-phospho]-glycerol + octanoyl-CoA = 1'-[1-acyl-2-octanoyl-sn-glycero-3-phospho],3'-[1-acyl,2-hydroxy-sn-glycero-3-phospho]-glycerol + CoA. It carries out the reaction 1'-[1,2-diacyl-sn-glycero-3-phospho],3'-[1-acyl-sn-glycero-3-phospho]-glycerol + hexadecanoyl-CoA = 1'-[1,2-diacyl-sn-glycero-3-phospho],3'-[1-acyl,2-hexadecanoyl-sn-glycero-3-phospho]-glycerol + CoA. The enzyme catalyses 1'-[1,2-diacyl-sn-glycero-3-phospho],3'-[1-acyl-sn-glycero-3-phospho]-glycerol + (5Z,8Z,11Z,14Z)-eicosatetraenoyl-CoA = 1'-[1,2-diacyl-sn-glycero-3-phospho],3'-[1-acyl,2-(5Z,8Z,11Z,14Z)-eicosatetraenoyl-sn-glycero-3-phospho]-glycerol + CoA. It catalyses the reaction 1',3'-bis-[1-acyl-sn-glycero-3-phospho]-glycerol + (5Z,8Z,11Z,14Z)-eicosatetraenoyl-CoA = 1'-[1-acyl-2-(5Z,8Z,11Z,14Z)-eicosatetraenoyl-sn-glycero-3-phospho],3'-[1-acyl,2-hydroxy-sn-glycero-3-phospho]-glycerol + CoA. The catalysed reaction is a 1-acyl-sn-glycero-3-phospho-(1D-myo-inositol) + octadecanoyl-CoA = a 1-acyl-2-octadecanoyl-sn-glycero-3-phospho-(1D-myo-inositol) + CoA. It carries out the reaction a 2-acyl-sn-glycero-3-phospho-D-myo-inositol + octadecanoyl-CoA = 1-octadecanoyl-2-acyl-sn-glycero-3-phospho-1D-myo-inositol + CoA. Its pathway is phospholipid metabolism; CDP-diacylglycerol biosynthesis; CDP-diacylglycerol from sn-glycerol 3-phosphate: step 2/3. Its function is as follows. Exhibits acyl-CoA:lysocardiolipin acyltransferase (ALCAT) activity; catalyzes the reacylation of lyso-cardiolipin to cardiolipin (CL), a key step in CL remodeling. Recognizes both monolysocardiolipin and dilysocardiolipin as substrates with a preference for linoleoyl-CoA and oleoyl-CoA as acyl donors. Also exhibits 1-acyl-sn-glycerol-3-phosphate acyltransferase activity (AGPAT) activity; converts 1-acyl-sn-glycerol-3- phosphate (lysophosphatidic acid or LPA) into 1,2-diacyl-sn-glycerol-3- phosphate (phosphatidic acid or PA) by incorporating an acyl moiety at the sn-2 position of the glycerol backbone. Possesses both lysophosphatidylinositol acyltransferase (LPIAT) and lysophosphatidylglycerol acyltransferase (LPGAT) activities. Required for establishment of the hematopoietic and endothelial lineages. The sequence is that of Lysocardiolipin acyltransferase 1 (LCLAT1) from Homo sapiens (Human).